A 95-amino-acid chain; its full sequence is Small ribosomal subunit protein bS16 (95 aa).

Belongs to the bacterial ribosomal protein bS16 family.

In Roseiflexus sp. (strain RS-1), this protein is Small ribosomal subunit protein bS16.